Here is a 336-residue protein sequence, read N- to C-terminus: Glucokinase (336 aa).

12–17 contacts ATP; it reads ADIGGT.

Belongs to the bacterial glucokinase family.

The protein resides in the cytoplasm. The catalysed reaction is D-glucose + ATP = D-glucose 6-phosphate + ADP + H(+). The protein is Glucokinase of Helicobacter pylori (strain P12).